The sequence spans 470 residues: Aspartate-semialdehyde dehydrogenase 1 (470 aa).

NAD(+)-binding residues include Thr-145 and Lys-171. Residue Asp-243 is part of the active site. Gly-245 contributes to the NAD(+) binding site. Cys-277 is a catalytic residue. Glu-371 is a binding site for NAD(+).

The protein belongs to the aldehyde dehydrogenase family.

The enzyme catalyses L-aspartate 4-semialdehyde + NAD(+) + H2O = L-aspartate + NADH + 2 H(+). Its function is as follows. Dehydrogenase involved in the degradation of canavanine, the delta-oxa-analog of arginine, allowing growth on canavanine as sole nitrogen and carbon source. Probably catalyzes the NAD(+)-dependent oxidation of L-aspartate-semialdehyde to L-aspartate. This is Aspartate-semialdehyde dehydrogenase 1 from Pseudomonas canavaninivorans.